The sequence spans 442 residues: tRNA modification GTPase MnmE (442 aa).

Arg23, Glu82, and Lys121 together coordinate (6S)-5-formyl-5,6,7,8-tetrahydrofolate. Positions 215–364 (GTSLILAGKP…VKQALIQWMQ (150 aa)) constitute a TrmE-type G domain. K(+) is bound at residue Asn225. Residues 225 to 230 (NVGKSS), 244 to 250 (THIPGTT), 269 to 272 (DTAG), and 325 to 328 (NKAD) contribute to the GTP site. Ser229 contributes to the Mg(2+) binding site. K(+)-binding residues include Thr244, Ile246, and Thr249. Thr250 serves as a coordination point for Mg(2+). Lys442 provides a ligand contact to (6S)-5-formyl-5,6,7,8-tetrahydrofolate.

It belongs to the TRAFAC class TrmE-Era-EngA-EngB-Septin-like GTPase superfamily. TrmE GTPase family. As to quaternary structure, homodimer. Heterotetramer of two MnmE and two MnmG subunits. The cofactor is K(+).

Its subcellular location is the cytoplasm. Exhibits a very high intrinsic GTPase hydrolysis rate. Involved in the addition of a carboxymethylaminomethyl (cmnm) group at the wobble position (U34) of certain tRNAs, forming tRNA-cmnm(5)s(2)U34. This Chlamydia pneumoniae (Chlamydophila pneumoniae) protein is tRNA modification GTPase MnmE.